The following is an 803-amino-acid chain: MEIPKLLPARGTLQGGGGGGIPAGGGRVHRGPDSPAGQVPTRRLLLLRGPQDGGPGRRREEASTASRGPGPSLLAPRTDQPSGGGGGGGDDFFLVLLDPVGGDVETAGSGQAAGPVLREEAEEGPGLQGGESGANPAGPTALGPRCLSAVPTPAPISAPGPAAAFAGTVTIHNQDLLLRFENGVLTLATPPPHAWEPGAAPAQQPGCLIAPQAGFPHAAHPGDCPELPPDLLLAEPAEPAPAPAPEEEAEGPAAALGPRGPLGSGPGVVLYLCPEAQCGQTFAKKHQLKVHLLTHSSSQGQRPFKCPLGGCGWTFTTSYKLKRHLQSHDKLRPFGCPAEGCGKSFTTVYNLKAHMKGHEQENSFKCEVCEESFPTQAKLSAHQRSHFEPERPYQCAFSGCKKTFITVSALFSHNRAHFREQELFSCSFPGCSKQYDKACRLKIHLRSHTGERPFLCDFDGCGWNFTSMSKLLRHKRKHDDDRRFMCPVEGCGKSFTRAEHLKGHSITHLGTKPFVCPVAGCCARFSARSSLYIHSKKHLQDVDTWKSRCPISSCNKLFTSKHSMKTHMVKRHKVGQDLLAQLEAANSLTPSSELTSQRQNDLSDAEIVSLFSDVPDSTSAALLDTALVNSGILTIDVASVSSTLAGHLPANNNNSVGQAVDPPSLMATSDPPQSLDTSLFFGTAATGFQQSSLNMDEVSSVSVGPLGSLDSLAMKNSSPEPQALTPSSKLTVDTDALTPSSTLCENSVSELLTPTKAEWNVHPDSDFFGQEGETQFGFPNAAGNHGSQKETDLITVTGSSFLV.

Disordered stretches follow at residues 1–91 (MEIP…GGDD), 120–140 (EAEE…AGPT), and 218–260 (AAHP…GPRG). Residues 13-26 (LQGGGGGGIPAGGG) are compositionally biased toward gly residues. C2H2-type zinc fingers lie at residues 271–295 (YLCP…LLTH), 304–328 (FKCP…LQSH), 334–358 (FGCP…MKGH), 364–386 (FKCE…QRSH), 393–417 (YQCA…NRAH), 424–448 (FSCS…LRSH), 454–478 (FLCD…KRKH), 484–508 (FMCP…SITH), 514–538 (FVCP…SKKH), and 547–572 (SRCP…VKRH). The interval 271–577 (YLCPEAQCGQ…MVKRHKVGQD (307 aa)) is required for interaction with ZXDC. Positions 576 to 703 (QDLLAQLEAA…NMDEVSSVSV (128 aa)) are required for transcriptional activation.

It belongs to the ZXD family. Self-associates. Interacts with ZXDC and CIITA. May be expressed in brain, heart, kidney, liver, lung, muscle and placenta.

Its subcellular location is the nucleus. Functionally, cooperates with CIITA to promote transcription of MHC class I and MHC class II genes. The sequence is that of Zinc finger X-linked protein ZXDB (ZXDB) from Homo sapiens (Human).